Here is a 263-residue protein sequence, read N- to C-terminus: uncharacterized protein (263 aa).

It localises to the mitochondrion. This is an uncharacterized protein from Schizosaccharomyces pombe (strain 972 / ATCC 24843) (Fission yeast).